The chain runs to 203 residues: Holliday junction branch migration complex subunit RuvA (203 aa).

The tract at residues 1-64 (MIGRLRGIIL…EDAQLLYGFN (64 aa)) is domain I. The interval 65–142 (NKQERTLFKE…KGLHGDLFTP (78 aa)) is domain II. Positions 143-154 (AADLVLTSPASP) are flexible linker. The tract at residues 155-203 (ATDDAEQEAVAALVALGYKPQEASRMVSKIARPDASSETLIREALRAAL) is domain III.

This sequence belongs to the RuvA family. In terms of assembly, homotetramer. Forms an RuvA(8)-RuvB(12)-Holliday junction (HJ) complex. HJ DNA is sandwiched between 2 RuvA tetramers; dsDNA enters through RuvA and exits via RuvB. An RuvB hexamer assembles on each DNA strand where it exits the tetramer. Each RuvB hexamer is contacted by two RuvA subunits (via domain III) on 2 adjacent RuvB subunits; this complex drives branch migration. In the full resolvosome a probable DNA-RuvA(4)-RuvB(12)-RuvC(2) complex forms which resolves the HJ.

It localises to the cytoplasm. Functionally, the RuvA-RuvB-RuvC complex processes Holliday junction (HJ) DNA during genetic recombination and DNA repair, while the RuvA-RuvB complex plays an important role in the rescue of blocked DNA replication forks via replication fork reversal (RFR). RuvA specifically binds to HJ cruciform DNA, conferring on it an open structure. The RuvB hexamer acts as an ATP-dependent pump, pulling dsDNA into and through the RuvAB complex. HJ branch migration allows RuvC to scan DNA until it finds its consensus sequence, where it cleaves and resolves the cruciform DNA. This chain is Holliday junction branch migration complex subunit RuvA, found in Citrobacter koseri (strain ATCC BAA-895 / CDC 4225-83 / SGSC4696).